Here is a 1010-residue protein sequence, read N- to C-terminus: Plasma membrane ATPase 2 (1010 aa).

The segment covering 1 to 14 has biased composition (basic and acidic residues); sequence MQRNNGEGRPEGMH. Disordered regions lie at residues 1–126 and 139–165; these read MQRN…EDED and QDQEEEQVEEEESPGPAGAAKVVPEEL. Residues 1–201 are Cytoplasmic-facing; the sequence is MQRNNGEGRP…KEEKTNNIKK (201 aa). Positions 25-34 are enriched in polar residues; it reads FKNNASPQDD. The segment covering 42 to 52 has biased composition (acidic residues); that stretch reads YEEGGVEDSAV. Residues 68-106 show a composition bias toward polar residues; sequence APNTHAQQANLQSGNTSITHETQSTSRGQEATTSPSLSA. Residues 140–151 show a composition bias toward acidic residues; the sequence is DQEEEQVEEEES. The chain crosses the membrane as a helical span at residues 202–222; it reads FLSFFVGPIQFVMELAAALAA. At 223 to 226 the chain is on the extracellular side; the sequence is GLRD. The helical transmembrane segment at 227 to 246 threads the bilayer; the sequence is WVDFGVICALLLLNATVGFV. Topologically, residues 247 to 377 are cytoplasmic; that stretch reads QEYQAGSIVD…SQGHFTEVLN (131 aa). The helical transmembrane segment at 378-399 threads the bilayer; the sequence is GIGTILLVLVILTLLCIYTAAF. The Extracellular portion of the chain corresponds to 400–410; it reads YRSVRLAALLE. The helical transmembrane segment at 411–433 threads the bilayer; the sequence is YTLAITIIGVPVGLPAVVTTTMA. Residues 434–805 are Cytoplasmic-facing; the sequence is VGAAYLAKKK…LIIRNQLLNL (372 aa). Residue D464 is the 4-aspartylphosphate intermediate of the active site. Mg(2+) contacts are provided by D720 and D724. Residues 806–824 form a helical membrane-spanning segment; that stretch reads ELIVFIAIFADVATLAIAY. The Extracellular portion of the chain corresponds to 825 to 840; sequence DNAPYAMKPVKWNLPR. A helical transmembrane segment spans residues 841–860; sequence LWGLATIVGILLAIGTWIVN. The Cytoplasmic segment spans residues 861–912; that stretch reads TTMIAQGQNRGIVQNFGVQDEVLFLQISLTENWLIFITRCSGPFWSSFPSWQ. A helical membrane pass occupies residues 913–933; that stretch reads LSGAVLVVDILATLFCIFGWF. The Extracellular portion of the chain corresponds to 934–946; the sequence is KGGHQTSIVAVIR. The helical transmembrane segment at 947–963 threads the bilayer; sequence IWMYSFGIFCLIAGVYY. Residues 964–1010 are Cytoplasmic-facing; it reads ILSESSSFDRWMHGKHKERGTTRKLEDFVMQLQRTSTHHEAEGKVTS.

This sequence belongs to the cation transport ATPase (P-type) (TC 3.A.3) family. Type IIIA subfamily. In addition to transient phosphorylation of the active site Asp residue, this protein, but not the product of the pma1 locus, is phosphorylated efficiently in isolated plasma membrane.

It localises to the cell membrane. It carries out the reaction ATP + H2O + H(+)(in) = ADP + phosphate + 2 H(+)(out). In terms of biological role, the plasma membrane ATPase of plants and fungi is a hydrogen ion pump. The proton gradient it generates drives the active transport of nutrients by H(+)-symport. The resulting external acidification and/or internal alkinization may mediate growth responses. This Schizosaccharomyces pombe (strain 972 / ATCC 24843) (Fission yeast) protein is Plasma membrane ATPase 2 (pma2).